Here is a 238-residue protein sequence, read N- to C-terminus: Adenylate dimethylallyltransferase (238 aa).

It belongs to the isopentenyl transferase family.

It catalyses the reaction dimethylallyl diphosphate + AMP = N(6)-(dimethylallyl)adenosine 5'-phosphate + diphosphate. Its function is as follows. Transfers dimethylallyl groups to AMP as part of the biosynthesis of cytokinin phytohormones. The protein is Adenylate dimethylallyltransferase (tzs) of Ralstonia solanacearum (Pseudomonas solanacearum).